Consider the following 80-residue polypeptide: RNA-binding protein KhpA (80 aa).

Positions 33–80 (GRTVEVHVHPDDLGKVIGRGGRTATALRKLVAGIGGRGIRVDVVDTDQ) constitute a KH domain.

Belongs to the KhpA RNA-binding protein family.

It is found in the cytoplasm. In terms of biological role, a probable RNA-binding protein. This is RNA-binding protein KhpA from Mycobacterium leprae (strain TN).